Here is a 420-residue protein sequence, read N- to C-terminus: Glucose-1-phosphate adenylyltransferase (420 aa).

Alpha-D-glucose 1-phosphate-binding positions include Tyr-107, Gly-172, 187 to 188 (EK), and Ser-205.

Belongs to the bacterial/plant glucose-1-phosphate adenylyltransferase family. Homotetramer.

The enzyme catalyses alpha-D-glucose 1-phosphate + ATP + H(+) = ADP-alpha-D-glucose + diphosphate. The protein operates within glycan biosynthesis; glycogen biosynthesis. Involved in the biosynthesis of ADP-glucose, a building block required for the elongation reactions to produce glycogen. Catalyzes the reaction between ATP and alpha-D-glucose 1-phosphate (G1P) to produce pyrophosphate and ADP-Glc. This is Glucose-1-phosphate adenylyltransferase from Rhizobium radiobacter (Agrobacterium tumefaciens).